The primary structure comprises 126 residues: Small ribosomal subunit protein uS12 (126 aa).

The interval 1 to 28 (MPTIQQLIRSERSKVQKKTKSPALKQCP) is disordered. Aspartate 89 bears the 3-methylthioaspartic acid mark. Positions 104 to 126 (ATGVKDRKQGRSKYGTKREKAKK) are disordered. Positions 113 to 126 (GRSKYGTKREKAKK) are enriched in basic residues.

It belongs to the universal ribosomal protein uS12 family. In terms of assembly, part of the 30S ribosomal subunit. Contacts proteins S8 and S17. May interact with IF1 in the 30S initiation complex.

In terms of biological role, with S4 and S5 plays an important role in translational accuracy. Interacts with and stabilizes bases of the 16S rRNA that are involved in tRNA selection in the A site and with the mRNA backbone. Located at the interface of the 30S and 50S subunits, it traverses the body of the 30S subunit contacting proteins on the other side and probably holding the rRNA structure together. The combined cluster of proteins S8, S12 and S17 appears to hold together the shoulder and platform of the 30S subunit. The sequence is that of Small ribosomal subunit protein uS12 from Synechocystis sp. (strain ATCC 27184 / PCC 6803 / Kazusa).